The chain runs to 400 residues: Elongation factor Tu (400 aa).

A tr-type G domain is found at 10–208 (KPHVNVGTIG…AMDNYIPEPQ (199 aa)). Residues 19 to 26 (GHIDHGKS) form a G1 region. 19–26 (GHIDHGKS) provides a ligand contact to GTP. Serine 26 lines the Mg(2+) pocket. Residues 60–64 (GITIN) form a G2 region. The interval 81–84 (DCPG) is G3. Residues 81-85 (DCPGH) and 136-139 (NKTD) contribute to the GTP site. The G4 stretch occupies residues 136-139 (NKTD). A G5 region spans residues 174–176 (SAL).

It belongs to the TRAFAC class translation factor GTPase superfamily. Classic translation factor GTPase family. EF-Tu/EF-1A subfamily. As to quaternary structure, monomer.

The protein resides in the cytoplasm. The enzyme catalyses GTP + H2O = GDP + phosphate + H(+). In terms of biological role, GTP hydrolase that promotes the GTP-dependent binding of aminoacyl-tRNA to the A-site of ribosomes during protein biosynthesis. The sequence is that of Elongation factor Tu from Thermotoga petrophila (strain ATCC BAA-488 / DSM 13995 / JCM 10881 / RKU-1).